The sequence spans 149 residues: D-aminoacyl-tRNA deacylase (149 aa).

The Gly-cisPro motif, important for rejection of L-amino acids signature appears at 137–138 (GP).

This sequence belongs to the DTD family. Homodimer.

It is found in the cytoplasm. It carries out the reaction glycyl-tRNA(Ala) + H2O = tRNA(Ala) + glycine + H(+). The catalysed reaction is a D-aminoacyl-tRNA + H2O = a tRNA + a D-alpha-amino acid + H(+). Its function is as follows. An aminoacyl-tRNA editing enzyme that deacylates mischarged D-aminoacyl-tRNAs. Also deacylates mischarged glycyl-tRNA(Ala), protecting cells against glycine mischarging by AlaRS. Acts via tRNA-based rather than protein-based catalysis; rejects L-amino acids rather than detecting D-amino acids in the active site. By recycling D-aminoacyl-tRNA to D-amino acids and free tRNA molecules, this enzyme counteracts the toxicity associated with the formation of D-aminoacyl-tRNA entities in vivo and helps enforce protein L-homochirality. This is D-aminoacyl-tRNA deacylase from Clostridium botulinum (strain ATCC 19397 / Type A).